The primary structure comprises 117 residues: Ribosome-binding factor A (117 aa).

This sequence belongs to the RbfA family. In terms of assembly, monomer. Binds 30S ribosomal subunits, but not 50S ribosomal subunits or 70S ribosomes.

The protein resides in the cytoplasm. In terms of biological role, one of several proteins that assist in the late maturation steps of the functional core of the 30S ribosomal subunit. Associates with free 30S ribosomal subunits (but not with 30S subunits that are part of 70S ribosomes or polysomes). Required for efficient processing of 16S rRNA. May interact with the 5'-terminal helix region of 16S rRNA. The polypeptide is Ribosome-binding factor A (Syntrophobacter fumaroxidans (strain DSM 10017 / MPOB)).